The sequence spans 687 residues: Adhesion G-protein coupled receptor G1 (687 aa).

Residues Met1–Ser25 form the signal peptide. Heparin is bound at residue Gly26 to Arg33. Over Gly26 to Tyr402 the chain is Extracellular. Cystine bridges form between Cys35–Cys91 and Cys121–Cys177. N-linked (GlcNAc...) asparagine glycosylation is found at Asn39, Asn148, and Asn171. Leu190–Pro200 provides a ligand contact to heparin. The 172-residue stretch at Asp224–Val395 folds into the GAIN-B domain. Residues Asn234, Asn303, Asn324, and Asn341 are each glycosylated (N-linked (GlcNAc...) asparagine). Disulfide bonds link Cys346–Cys377 and Cys366–Cys379. Positions Cys346–Val395 are GPS. The tract at residues Tyr384 to Ala397 is stachel. The helical transmembrane segment at Leu403–Ala423 threads the bilayer. Residues Ala424–Asn442 lie on the Cytoplasmic side of the membrane. The chain crosses the membrane as a helical span at residues Leu443 to Thr463. Over Gly464–Thr471 the chain is Extracellular. Residues Ser472–Tyr492 form a helical membrane-spanning segment. Residues Asn493 to Lys512 are Cytoplasmic-facing. Residues Leu513–Val533 traverse the membrane as a helical segment. The Extracellular portion of the chain corresponds to Asn534–Gly570. The chain crosses the membrane as a helical span at residues Leu571–Leu591. Residues Arg592 to Val603 lie on the Cytoplasmic side of the membrane. The chain crosses the membrane as a helical span at residues Leu604–Phe624. The Extracellular segment spans residues Ala625–Gln630. A helical membrane pass occupies residues Leu631–Trp651. Topologically, residues Tyr652–Ile687 are cytoplasmic. The tract at residues Ser664 to Ile687 is disordered. A compositionally biased stretch (low complexity) spans Ser678–Ile687.

Belongs to the G-protein coupled receptor 2 family. LN-TM7 subfamily. In terms of assembly, heterodimer of 2 chains generated by proteolytic processing; the large extracellular N-terminal fragment (ADGRG1 NT) and the membrane-bound C-terminal fragment (ADGRG1-CT) predominantly remain associated and non-covalently linked. ADGRG1 NT self-associates in a trans-trans manner; the homophilic interaction enhances receptor signaling. Interacts with TGM2. Interacts with heparin; leading to the reduction of ADGRG1 shedding. Interacts with COL3A1. Part of a GPCR-tetraspanin complex at least consisting of ADGRG1, CD81, eventually CD9, and GNA11 in which CD81 is enhancing the association of ADGRG1 with GNA11. In terms of processing, autoproteolytically cleaved into 2 fragments; the large extracellular N-terminal fragment and the membroune-bound C-terminal fragment predominantly remain associated and non-covalently linked. Post-translationally, N-glycosylated. The secreted ADGRG1 N-terminal fragment is heavily glycosylated. Ubiquitinated. Undergoes polyubiquitination upon activation. In terms of tissue distribution, expressed in neural progenitor cells in fetal forbrain. Expressed in migrating neurons. Expressed in radial glial endfeet (at protein level). Expressed in peritubular myoid cells, Sertoli cells, and germ cells of the testis.

The protein localises to the cell membrane. The protein resides in the secreted. Its subcellular location is the membrane raft. Forms a heterodimer of 2 chains generated by proteolytic processing that remain associated through non-covalent interactions mediated by the GAIN-B domain. In the inactivated receptor, the Stachel sequence (also named stalk) is embedded in the GAIN-B domain, where it adopts a beta-strand conformation. On activation, the Stachel moves into the 7 transmembrane region and adopts a twisted hook-shaped configuration that forms contacts within the receptor, leading to coupling of a G-alpha protein, which activates signaling. The cleaved GAIN-B and N-terminal domains can then dissociate from the rest of the receptor. Activated by the small-molecule agonist, 3-alpha-acetoxydihydrodeoxygedunin (3-alpha-DOG). Its function is as follows. Adhesion G-protein coupled receptor (aGPCR) for steroid hormone 17alpha-hydroxypregnenolone (17-OH), which is involved in cell adhesion and cell-cell interactions. Ligand binding causes a conformation change that triggers signaling via guanine nucleotide-binding proteins (G proteins) and modulates the activity of downstream effectors, such as RhoA pathway. ADGRG1 is coupled to G(12) and/or G(13) G proteins (GNA12 and GNA13, respectively) and mediates the activation Rho small GTPases. Acts as a potent suppressor of ferroptosis: binding to 17-OH-binding initiates signaling that down-regulates CD36 and alleviates ferroptosis-induced liver injury. Ligand-binding also induces cell adhesion activity via association with proteins such as collagen III/COL3A1 and TGM2. Mediates cell matrix adhesion in developing neurons and hematopoietic stem cells. Involved in cortical development, specifically in maintenance of the pial basement membrane integrity and in cortical lamination: association with COL3A1 in the developing brain inhibits neuronal migration via activation of the RhoA pathway. Together with TGM2, acts as a regulator of myelination and myelin repair in oligodendrocyte precursor cells. Acts as a hemostatic sensor of shear force: G protein-coupled receptor signaling is activated in response to shear force in platelets, promoting G(13) G protein signaling, and platelet shape change and aggregation in a COL3A1-dependent manner. Acts as an inhibitor of VEGFA production thereby inhibiting angiogenesis through a signaling pathway mediated by PRKCA. Plays a role in the maintenance of hematopoietic stem cells in bone marrow niche. Plays an essential role in testis development. Adhesion G-protein coupled receptor (aGPCR) for phosphatidylserine, which is involved in microglia-mediated synapse pruning during development. Required to maintain appropriate synaptic numbers in several brain regions in a time- and circuit-dependent fashion: phosphatidylserine-binding acts as a 'eat-me' signal for apoptotic cells, leading to microglial engulfment of phosphatidylserine-positive synapses. The sequence is that of Adhesion G-protein coupled receptor G1 from Mus musculus (Mouse).